A 466-amino-acid polypeptide reads, in one-letter code: Glutamate--tRNA ligase (466 aa).

Positions Pro11–Asn21 match the 'HIGH' region motif. A 'KMSKS' region motif is present at residues Lys243–Arg247. Lys246 is an ATP binding site.

It belongs to the class-I aminoacyl-tRNA synthetase family. Glutamate--tRNA ligase type 1 subfamily. Monomer.

The protein resides in the cytoplasm. It carries out the reaction tRNA(Glu) + L-glutamate + ATP = L-glutamyl-tRNA(Glu) + AMP + diphosphate. Catalyzes the attachment of glutamate to tRNA(Glu) in a two-step reaction: glutamate is first activated by ATP to form Glu-AMP and then transferred to the acceptor end of tRNA(Glu). The polypeptide is Glutamate--tRNA ligase (Cupriavidus taiwanensis (strain DSM 17343 / BCRC 17206 / CCUG 44338 / CIP 107171 / LMG 19424 / R1) (Ralstonia taiwanensis (strain LMG 19424))).